Reading from the N-terminus, the 303-residue chain is UDP-N-acetylenolpyruvoylglucosamine reductase (303 aa).

One can recognise an FAD-binding PCMH-type domain in the interval Lys-23–Gly-188. Arg-167 is a catalytic residue. Ser-217 acts as the Proton donor in catalysis. Glu-287 is an active-site residue.

This sequence belongs to the MurB family. FAD serves as cofactor.

It localises to the cytoplasm. It catalyses the reaction UDP-N-acetyl-alpha-D-muramate + NADP(+) = UDP-N-acetyl-3-O-(1-carboxyvinyl)-alpha-D-glucosamine + NADPH + H(+). It participates in cell wall biogenesis; peptidoglycan biosynthesis. In terms of biological role, cell wall formation. In Streptococcus uberis (strain ATCC BAA-854 / 0140J), this protein is UDP-N-acetylenolpyruvoylglucosamine reductase.